A 266-amino-acid polypeptide reads, in one-letter code: 4-hydroxy-tetrahydrodipicolinate reductase (266 aa).

10–15 (GPRGRM) lines the NAD(+) pocket. An NADP(+)-binding site is contributed by Lys-38. NAD(+)-binding positions include 99 to 101 (GTT) and 125 to 128 (APNF). The active-site Proton donor/acceptor is His-155. His-156 provides a ligand contact to (S)-2,3,4,5-tetrahydrodipicolinate. The active-site Proton donor is the Lys-159. Residue 165–166 (GT) coordinates (S)-2,3,4,5-tetrahydrodipicolinate.

It belongs to the DapB family.

It localises to the cytoplasm. It catalyses the reaction (S)-2,3,4,5-tetrahydrodipicolinate + NAD(+) + H2O = (2S,4S)-4-hydroxy-2,3,4,5-tetrahydrodipicolinate + NADH + H(+). The catalysed reaction is (S)-2,3,4,5-tetrahydrodipicolinate + NADP(+) + H2O = (2S,4S)-4-hydroxy-2,3,4,5-tetrahydrodipicolinate + NADPH + H(+). Its pathway is amino-acid biosynthesis; L-lysine biosynthesis via DAP pathway; (S)-tetrahydrodipicolinate from L-aspartate: step 4/4. Catalyzes the conversion of 4-hydroxy-tetrahydrodipicolinate (HTPA) to tetrahydrodipicolinate. The protein is 4-hydroxy-tetrahydrodipicolinate reductase of Bacillus thuringiensis subsp. konkukian (strain 97-27).